Consider the following 1087-residue polypeptide: Kinesin-like protein KIN-14F (1087 aa).

The Calponin-homology (CH) domain occupies 1-110 (MDQGAMETLP…CILCLKGFYE (110 aa)). The segment at 136–155 (SSPPQYGIGSESTTDESVSL) is disordered. In terms of domain architecture, Kinesin motor spans 377 to 705 (TIRVYCRVRP…LKFAQRVASI (329 aa)). 461 to 468 (GQTGSGKT) serves as a coordination point for ATP. The stretch at 710-749 (ARSNKETGEIRDLKDEISSLKSAMEKKEAELEQLRSGSIR) forms a coiled coil. 3 disordered regions span residues 740 to 858 (LEQL…PVSR), 923 to 949 (QGGV…FQKL), and 1004 to 1087 (DSTL…FMVP). 3 stretches are compositionally biased toward polar residues: residues 744-754 (RSGSIRNTTEC), 780-797 (PQPN…CSTG), and 836-856 (TDRA…NLPV). A compositionally biased stretch (polar residues) spans 1017–1033 (EPPSKSKNAQRNSSKNS). Basic and acidic residues predominate over residues 1042-1054 (YAHEDTSLVDDKP). A compositionally biased stretch (basic residues) spans 1076–1087 (SRSTHHARFMVP).

The protein belongs to the TRAFAC class myosin-kinesin ATPase superfamily. Kinesin family. KIN-14 subfamily. In terms of assembly, interacts (via C-terminus) with VDAC3. As to expression, expressed in roots, leaves, stems and flowers (at protein level).

The protein localises to the cytoplasm. Its subcellular location is the cytoskeleton. It is found in the mitochondrion. In terms of biological role, required for keeping the ATP levels stable and balancing the aerobic respiration pathways during seed germination at low temperature. The polypeptide is Kinesin-like protein KIN-14F (Arabidopsis thaliana (Mouse-ear cress)).